The primary structure comprises 356 residues: CMP-sialic acid transporter 2 (356 aa).

Positions 1–24 are enriched in basic and acidic residues; sequence MEYRRVKDQESYDVVSQKDIESPG. Residues 1-43 are disordered; sequence MEYRRVKDQESYDVVSQKDIESPGERSLSSTSATSSLSTAGAS. The Cytoplasmic portion of the chain corresponds to 1–52; sequence MEYRRVKDQESYDVVSQKDIESPGERSLSSTSATSSLSTAGASKGNNSWKLK. The segment covering 27 to 43 has biased composition (low complexity); that stretch reads SLSSTSATSSLSTAGAS. A helical transmembrane segment spans residues 53-73; sequence SIVTLALTLLTSSQAILIVWS. The Lumenal segment spans residues 74-82; the sequence is KRAGKYEYS. The helical transmembrane segment at 83–103 threads the bilayer; it reads VTTANFSVEALKCLLSLIALY. Residues 104 to 125 are Cytoplasmic-facing; that stretch reads RTWNSQGVTEDNRLSTSFDEVS. The helical transmembrane segment at 126–146 threads the bilayer; that stretch reads VYPIPAILYMVKNLLQYYIFA. Residues 147 to 149 are Lumenal-facing; that stretch reads YVD. The helical transmembrane segment at 150 to 172 threads the bilayer; the sequence is APAYQILKNLNIISTGVLYRIIL. Residues 173-175 are Cytoplasmic-facing; it reads KKK. Residues 176–196 traverse the membrane as a helical segment; sequence LSEIQWAAFILLCAGCTTAQL. Over 197 to 211 the chain is Lumenal; the sequence is NPSSDHVLQTPIQGW. A helical transmembrane segment spans residues 212–232; that stretch reads VMAIVMALLSGFAGVYTEAII. Residues 233–239 lie on the Cytoplasmic side of the membrane; sequence KKRPSRN. A helical membrane pass occupies residues 240–260; sequence INVQNFWLYIFGMLFNLVAIC. Residues 261–277 are Lumenal-facing; that stretch reads VQDFDAVMNKGFFHGYS. A helical membrane pass occupies residues 278 to 298; it reads FITVLMILNHALSGIAVSMVM. At 299–314 the chain is on the cytoplasmic side; that stretch reads KYADNIVKVYSTSVAM. A helical membrane pass occupies residues 315–335; sequence LLTAVVSVFLFGFHLSLAFFL. Residues 336–356 are Lumenal-facing; that stretch reads GSTVVSVSVYLHSVGKPQPQK.

This sequence belongs to the nucleotide-sugar transporter family. CMP-Sialate:CMP antiporter (TC 2.A.7.12) subfamily.

Its subcellular location is the golgi apparatus membrane. Its function is as follows. Sugar transporter involved in the transport of CMP-sialic acid from the cytoplasm into the Golgi. May transport important nucleotide sugars such as CMP-Kdo (2-keto-3-deoxy-D-manno-octulosonic acid) in physiological conditions. This Oryza sativa subsp. indica (Rice) protein is CMP-sialic acid transporter 2.